The primary structure comprises 338 residues: Extracellular globin (338 aa).

The N-terminal stretch at 1–18 (MRSLLLLSIVFFVVTVSA) is a signal peptide. N-linked (GlcNAc...) asparagine glycosylation occurs at Asn19. 2 Globin domains span residues 25–167 (CMKS…KHGR) and 174–316 (CMRS…RHGK). Heme b-binding residues include Gln82 and His114. An N-linked (GlcNAc...) asparagine glycan is attached at Asn216. Positions 231 and 263 each coordinate heme b. The segment at 313-338 (RHGKEHHEHKEEHKEEHKEEHKEEQH) is disordered.

The protein belongs to the globin family. In terms of assembly, homooctamer.

Its subcellular location is the secreted. It localises to the extracellular space. In terms of biological role, has an extremely high oxygen affinity. In a vacuum, it takes several minutes to release its oxygen compared to milliseconds for a normal globin. Could be used as an oxygen scavenger for sterol biosynthesis. The chain is Extracellular globin from Ascaris suum (Pig roundworm).